The sequence spans 825 residues: Tuftelin-interacting protein 11 (825 aa).

The disordered stretch occupies residues 1-135 (MSMSHLYGKD…RTFAGGIKSN (135 aa)). The segment covering 11–25 (EDSDGVEMENFEITD) has biased composition (acidic residues). Basic and acidic residues-rich tracts occupy residues 41–61 (QTKE…DERP) and 85–114 (PAAE…EAKK). Over residues 122 to 135 (KPSQRTFAGGIKSN) the composition is skewed to polar residues. A G-patch domain is found at 145-191 (TKGIGQKLLQKMGYVQGRGLGKNAQGIIAPIEAKQRKGKGAVGAYGS).

It belongs to the TFP11/STIP family. Identified in the spliceosome C complex.

The protein localises to the nucleus. Its function is as follows. Involved in pre-mRNA splicing, specifically in spliceosome disassembly during late-stage splicing events. In Xenopus tropicalis (Western clawed frog), this protein is Tuftelin-interacting protein 11 (tfip11).